Here is a 118-residue protein sequence, read N- to C-terminus: MSASQLETTEPADIVGQLQRAASAEDFFELLDVDFDPKVVNVARLHILKRMGQYLASEDLDGLPSAETKARCKTVLERAYADFVESSPLDQRVFKVLKDAVAPKSPRRPAFVSLDNLK.

This sequence belongs to the NifW family. Homotrimer; associates with NifD.

Its function is as follows. May protect the nitrogenase Fe-Mo protein from oxidative damage. The chain is Nitrogenase-stabilizing/protective protein NifW from Rhodopseudomonas palustris (strain BisB5).